The primary structure comprises 481 residues: Velvet complex subunit B (481 aa).

Disordered stretches follow at residues 1–157 (MNSA…YSKI) and 241–339 (GTGA…NGYG). Pro residues-rich tracts occupy residues 36–45 (HPPPPLPPPS), 53–62 (PPLPPPPSAP), and 96–112 (PYAPAPYQQPQPSQYPR). A Velvet domain is found at 160–464 (GSGWKYSLDV…ANQGIKIPIR (305 aa)). Composition is skewed to low complexity over residues 241 to 255 (GTGAMASSSTYTYSS) and 293 to 325 (QQSYGQAPSYPPSSSYGPPQQYYPRHSGYSAEP).

It belongs to the velvet family. VelB subfamily. Component of the heterotrimeric velvet complex composed of laeA, veA and velB; VeA acting as a bridging protein between laeA and velB. Forms a heterodimeric complex with vosA; the formation of the velB-vosA complex is light-dependent.

It localises to the nucleus. Its subcellular location is the cytoplasm. Functionally, component of the velvet transcription factor complex that controls sexual/asexual developmental ratio in response to light, promoting sexual development in the darkness while stimulating asexual sporulation under illumination. The velvet complex acts as a global regulator for secondary metabolite gene expression. Component of the velB-VosA heterodimeric complex that plays a dual role in activating genes associated with spore maturation and repressing certain development-associated genes. The velB-VosA complex binds DNA through the DNA-binding domain of vosA that recognizes an 11-nucleotide consensus sequence 5'-CTGGCCGCGGC-3' consisting of two motifs in the promoters of key developmental regulatory genes. Controls the biosynthetic gene cluster for beauvericin, a depsipeptide mycotoxin that functions as a virulence determinant. Also regulates chromatin structure and transcription of siderophore biosynthetic genes and is required for infection of tomato plants. This chain is Velvet complex subunit B, found in Fusarium oxysporum f. sp. lycopersici (strain 4287 / CBS 123668 / FGSC 9935 / NRRL 34936) (Fusarium vascular wilt of tomato).